Consider the following 238-residue polypeptide: Transmembrane protein 127 (238 aa).

Methionine 1 is subject to N-acetylmethionine. The segment covering 1–11 (MYAPGGAGLPG) has biased composition (gly residues). Residues 1-27 (MYAPGGAGLPGGRRRRSPGGSALPKQP) are disordered. Serine 17 bears the Phosphoserine mark. The next 3 membrane-spanning stretches (helical) occupy residues 96-116 (IAAF…LDVF), 130-150 (AFAH…SYWA), and 169-189 (VYVT…ASIL).

This sequence belongs to the TMEM127 family. Widely expressed.

It localises to the cell membrane. The protein localises to the cytoplasm. Functionally, controls cell proliferation acting as a negative regulator of TOR signaling pathway mediated by mTORC1. May act as a tumor suppressor. This Homo sapiens (Human) protein is Transmembrane protein 127 (TMEM127).